Consider the following 444-residue polypeptide: Tubulin beta-4 chain (444 aa).

GTP contacts are provided by Q11, E69, S138, G142, T143, G144, N204, and N226. E69 provides a ligand contact to Mg(2+).

Belongs to the tubulin family. As to quaternary structure, dimer of alpha and beta chains. A typical microtubule is a hollow water-filled tube with an outer diameter of 25 nm and an inner diameter of 15 nM. Alpha-beta heterodimers associate head-to-tail to form protofilaments running lengthwise along the microtubule wall with the beta-tubulin subunit facing the microtubule plus end conferring a structural polarity. Microtubules usually have 13 protofilaments but different protofilament numbers can be found in some organisms and specialized cells. Requires Mg(2+) as cofactor.

It localises to the cytoplasm. It is found in the cytoskeleton. Its function is as follows. Tubulin is the major constituent of microtubules, a cylinder consisting of laterally associated linear protofilaments composed of alpha- and beta-tubulin heterodimers. Microtubules grow by the addition of GTP-tubulin dimers to the microtubule end, where a stabilizing cap forms. Below the cap, tubulin dimers are in GDP-bound state, owing to GTPase activity of alpha-tubulin. The sequence is that of Tubulin beta-4 chain (TUBB4) from Arabidopsis thaliana (Mouse-ear cress).